The chain runs to 529 residues: UDP-glucuronosyltransferase 2B7 (529 aa).

Residues 1–23 form the signal peptide; that stretch reads MSVKWTSVILLIQLSFCFSSGNC. N-linked (GlcNAc...) asparagine glycans are attached at residues Asn67, Asn68, and Asn315. Residues 373 to 379 and Asp398 contribute to the UDP-alpha-D-glucuronate site; that span reads THGGANG. A helical transmembrane segment spans residues 493 to 509; sequence VIGFLLVCVATVIFIVT.

It belongs to the UDP-glycosyltransferase family.

Its subcellular location is the endoplasmic reticulum membrane. The catalysed reaction is glucuronate acceptor + UDP-alpha-D-glucuronate = acceptor beta-D-glucuronoside + UDP + H(+). It catalyses the reaction 17alpha-estradiol + UDP-alpha-D-glucuronate = 17alpha-estradiol 17-O-(beta-D-glucuronate) + UDP + H(+). The enzyme catalyses 17beta-estradiol + UDP-alpha-D-glucuronate = 17beta-estradiol 17-O-(beta-D-glucuronate) + UDP + H(+). It carries out the reaction 2-hydroxy-17beta-estradiol + UDP-alpha-D-glucuronate = 2-hydroxy-17beta-estradiol 3-O-(beta-D-glucuronate) + UDP + H(+). The catalysed reaction is 4-hydroxy-17beta-estradiol + UDP-alpha-D-glucuronate = 17beta-estradiol 4-O-(beta-D-glucuronate) + UDP + H(+). It catalyses the reaction 4-hydroxyestrone + UDP-alpha-D-glucuronate = estrone 4-O-(beta-D-glucuronate) + UDP + H(+). The enzyme catalyses 16alpha-hydroxyestrone + UDP-alpha-D-glucuronate = 16alpha-hydroxyestrone 16-O-(beta-D-glucuronate) + UDP + H(+). It carries out the reaction 16alpha,17beta-estriol + UDP-alpha-D-glucuronate = 16alpha,17beta-estriol 16-O-(beta-D-glucuronate) + UDP + H(+). The catalysed reaction is 16beta,17beta-estriol + UDP-alpha-D-glucuronate = 16beta,17beta-estriol 16-O-(beta-D-glucuronate) + UDP + H(+). It catalyses the reaction 16alpha,17alpha-estriol + UDP-alpha-D-glucuronate = 16alpha,17alpha-estriol 16-O-(beta-D-glucuronate) + UDP + H(+). The enzyme catalyses 16alpha,17alpha-estriol + UDP-alpha-D-glucuronate = 16alpha,17alpha-estriol 17-O-(beta-D-glucuronate) + UDP + H(+). It carries out the reaction epitestosterone + UDP-alpha-D-glucuronate = epitestosterone 17-O-(beta-D-glucuronate) + UDP + H(+). The catalysed reaction is hyodeoxycholate + UDP-alpha-D-glucuronate = hyodeoxycholate 6-O-(beta-D-glucuronate) + UDP + H(+). It catalyses the reaction hyocholate + UDP-alpha-D-glucuronate = hyocholate 6-O-(beta-D-glucuronate) + UDP + H(+). The enzyme catalyses all-trans-retinoate + UDP-alpha-D-glucuronate = all-trans-retinoyl-1-O-(beta-D-glucuronate) + UDP. It carries out the reaction all-trans-4-hydroxyretinoate + UDP-alpha-D-glucuronate = all-trans-4-hydroxy-4-O-(beta-D-glucuronide)-retinoate + UDP + H(+). The catalysed reaction is (E)-ferulate + UDP-alpha-D-glucuronate = (E)-ferulic acid beta-D-glucuronate ester + UDP. It catalyses the reaction 8-iso-prostaglandin F2alpha + UDP-alpha-D-glucuronate = 8-iso-prostaglandin F2alpha-glucuronide + UDP + H(+). The enzyme catalyses 5-epi-5-F2t-IsoP + UDP-alpha-D-glucuronate = 5-epi-5-F2t-IsoP-glucuronide + UDP + H(+). It carries out the reaction (5Z,8Z,11Z,14Z)-eicosatetraenoate + UDP-alpha-D-glucuronate = O-[(5Z),(8Z),(11Z),(14Z)-eicosatetraenoyl]-beta-D-glucuronate + UDP. The catalysed reaction is 15-hydroxy-(5Z,8Z,11Z,13E)-eicosatetraenoate + UDP-alpha-D-glucuronate = 15-O-(beta-D-glucuronosyl)-(5Z,8Z,11Z,14Z)-eicosatetraenoate + UDP + H(+). It catalyses the reaction 20-hydroxy-(5Z,8Z,11Z,14Z)-eicosatetraenoate + UDP-alpha-D-glucuronate = 20-O-(beta-D-glucuronosyl)-(5Z,8Z,11Z,14Z)-eicosatetraenoate + UDP + H(+). The enzyme catalyses (E)-ferulate + UDP-alpha-D-glucuronate = (E)-4-O-(beta-D-glucuronosyl)-ferulate + UDP + H(+). It carries out the reaction prostaglandin B1 + UDP-alpha-D-glucuronate = 15-O-(beta-D-glucuronosyl)-prostaglandin B1 + UDP + H(+). The catalysed reaction is mycophenolate + UDP-alpha-D-glucuronate = mycophenolic acid O-acyl-beta-D-glucuronide + UDP. It catalyses the reaction losartan + UDP-alpha-D-glucuronate = losartan-2-N-beta-D-glucuronide + UDP. The enzyme catalyses candesartan + UDP-alpha-D-glucuronate = candesartan O-beta-D-glucuronoside + UDP. It carries out the reaction candesartan + UDP-alpha-D-glucuronate = candesartan-2-N-beta-D-glucuronide + UDP. The catalysed reaction is zolasartan + UDP-alpha-D-glucuronate = zolarsartan O-beta-D-glucuronoside + UDP. Its function is as follows. UDP-glucuronosyltransferase (UGT) that catalyzes phase II biotransformation reactions in which lipophilic substrates are conjugated with glucuronic acid to increase the metabolite's water solubility, thereby facilitating excretion into either the urine or bile. Essential for the elimination and detoxification of drugs, xenobiotics and endogenous compounds. Catalyzes the glucuronidation of endogenous steroid hormones such as androgens (epitestosterone, androsterone) and estrogens (estradiol, epiestradiol, estriol, catechol estrogens). Also regulates the levels of retinoic acid, a major metabolite of vitamin A involved in apoptosis, cellular growth and differentiation, and embryonic development. Contributes to bile acid (BA) detoxification by catalyzing the glucuronidation of BA substrates, which are natural detergents for dietary lipids absorption. Involved in the glucuronidation of arachidonic acid (AA) and AA-derived eicosanoids including 15-HETE, 20-HETE, PGE2, PGB1 and F2-isoprostanes (8-iso-PGF2alpha and 5-epi-5-F2t-IsoP). Involved in the glucuronidation of the phytochemical ferulic acid at the phenolic or the carboxylic acid group. Involved in the glucuronidation of the AGTR1 angiotensin receptor antagonist losartan, caderastan and zolarsatan, drugs which can inhibit the effect of angiotensin II. Also metabolizes mycophenolate, an immunosuppressive agent. The sequence is that of UDP-glucuronosyltransferase 2B7 from Homo sapiens (Human).